Consider the following 236-residue polypeptide: Pyridoxal 5'-phosphate synthase subunit PdxT (236 aa).

61 to 63 (GES) lines the L-glutamine pocket. C93 functions as the Nucleophile in the catalytic mechanism. Residues R127 and 163 to 164 (IR) each bind L-glutamine. Catalysis depends on charge relay system residues H215 and E217.

This sequence belongs to the glutaminase PdxT/SNO family. As to quaternary structure, in the presence of PdxS, forms a dodecamer of heterodimers. Only shows activity in the heterodimer.

It carries out the reaction aldehydo-D-ribose 5-phosphate + D-glyceraldehyde 3-phosphate + L-glutamine = pyridoxal 5'-phosphate + L-glutamate + phosphate + 3 H2O + H(+). The enzyme catalyses L-glutamine + H2O = L-glutamate + NH4(+). The protein operates within cofactor biosynthesis; pyridoxal 5'-phosphate biosynthesis. In terms of biological role, catalyzes the hydrolysis of glutamine to glutamate and ammonia as part of the biosynthesis of pyridoxal 5'-phosphate. The resulting ammonia molecule is channeled to the active site of PdxS. The sequence is that of Pyridoxal 5'-phosphate synthase subunit PdxT from Pseudarthrobacter chlorophenolicus (strain ATCC 700700 / DSM 12829 / CIP 107037 / JCM 12360 / KCTC 9906 / NCIMB 13794 / A6) (Arthrobacter chlorophenolicus).